The primary structure comprises 245 residues: Polyhedrin (245 aa).

Belongs to the polyhedrin family.

Major component of the virus occlusion bodies, which are large proteinaceous structures (polyhedra), that protect the virus from the outside environment for extended periods until they are ingested by insect larvae. This Bombyx mori nuclear polyhedrosis virus (BmNPV) protein is Polyhedrin (PH).